A 425-amino-acid chain; its full sequence is MTQTKEPLTKAESAELEQEIELSQYINTDDIDDDDIDVEDLEQEVAATEGKEKKVRKIRKDAVKKKPYTEDSIRIYLQEIGRIRLLRAEEEIELARQIADLLELELIRDNLTLQLERQPSELEWGKQVWKLETAKQRLVGDKKKEPKKKDIDSYLANPDNELSLENEWSQQPNKNFAAFRRRLFLDRRAKDKMVQSNLRLVVSIAKKYMNRGLSFQDLIQEGSLGLIRAAEKFDHEKGYKFSTYATWWIRQAITRAIADQSRTIRLPVHLYETISRIKKTTKLLSQEMRRKPTEEEIAEKMEMTIEKLRFIAKSAQLPISLETPIGKEEDSRLGDFIEADGETPEDEVSKNLLREDLENVLDTLSPRERDVLRLRYGLDDGRMKTLEEIGQIFNVTRERIRQIEAKALRKLRHPNRNSILKEYIR.

The segment at 193–263 is sigma-70 factor domain-2; it reads MVQSNLRLVV…TRAIADQSRT (71 aa). An Interaction with polymerase core subunit RpoC motif is present at residues 217-220; sequence DLIQ. The interval 272 to 347 is sigma-70 factor domain-3; that stretch reads ETISRIKKTT…EADGETPEDE (76 aa). The interval 360–413 is sigma-70 factor domain-4; the sequence is VLDTLSPRERDVLRLRYGLDDGRMKTLEEIGQIFNVTRERIRQIEAKALRKLRH. A DNA-binding region (H-T-H motif) is located at residues 386–405; that stretch reads LEEIGQIFNVTRERIRQIEA.

It belongs to the sigma-70 factor family. RpoD/SigA subfamily. Interacts transiently with the RNA polymerase catalytic core.

Its subcellular location is the cytoplasm. Its function is as follows. Sigma factors are initiation factors that promote the attachment of RNA polymerase to specific initiation sites and are then released. This sigma factor is the primary sigma factor during exponential growth. In Synechocystis sp. (strain ATCC 27184 / PCC 6803 / Kazusa), this protein is RNA polymerase sigma factor SigA.